Reading from the N-terminus, the 875-residue chain is uncharacterized protein (875 aa).

Residues 83–149 (PFQPPPPQPF…QPPQPPPQQL (67 aa)) form a disordered region. The span at 101–147 (QQPPQPPPDQPQQPQPPQQPPQQPPQQQPQPPQPPQQPPQPPQPPPQ) shows a compositional bias: pro residues.

This is an uncharacterized protein from Orgyia pseudotsugata multicapsid polyhedrosis virus (OpMNPV).